A 308-amino-acid chain; its full sequence is tRNA dimethylallyltransferase (308 aa).

An ATP-binding site is contributed by 14 to 21; that stretch reads GPTASGKT. 16 to 21 lines the substrate pocket; the sequence is TASGKT. 3 interaction with substrate tRNA regions span residues 39 to 42, 163 to 167, and 244 to 249; these read DSAL, QRLSR, and RCVGYR.

This sequence belongs to the IPP transferase family. In terms of assembly, monomer. It depends on Mg(2+) as a cofactor.

The catalysed reaction is adenosine(37) in tRNA + dimethylallyl diphosphate = N(6)-dimethylallyladenosine(37) in tRNA + diphosphate. Its function is as follows. Catalyzes the transfer of a dimethylallyl group onto the adenine at position 37 in tRNAs that read codons beginning with uridine, leading to the formation of N6-(dimethylallyl)adenosine (i(6)A). The polypeptide is tRNA dimethylallyltransferase (Shewanella oneidensis (strain ATCC 700550 / JCM 31522 / CIP 106686 / LMG 19005 / NCIMB 14063 / MR-1)).